The sequence spans 212 residues: 3-isopropylmalate dehydratase small subunit (212 aa).

It belongs to the LeuD family. LeuD type 1 subfamily. In terms of assembly, heterodimer of LeuC and LeuD.

It carries out the reaction (2R,3S)-3-isopropylmalate = (2S)-2-isopropylmalate. The protein operates within amino-acid biosynthesis; L-leucine biosynthesis; L-leucine from 3-methyl-2-oxobutanoate: step 2/4. Its function is as follows. Catalyzes the isomerization between 2-isopropylmalate and 3-isopropylmalate, via the formation of 2-isopropylmaleate. The polypeptide is 3-isopropylmalate dehydratase small subunit (Pseudomonas aeruginosa (strain UCBPP-PA14)).